The following is a 569-amino-acid chain: Urease subunit alpha (569 aa).

The 439-residue stretch at 131–569 folds into the Urease domain; the sequence is GSIDTHIHFI…VPMAQRYFLL (439 aa). Residues His136, His138, and Lys219 each contribute to the Ni(2+) site. The residue at position 219 (Lys219) is an N6-carboxylysine. His221 contacts substrate. Ni(2+) contacts are provided by His248 and His274. The active-site Proton donor is His322. Asp362 lines the Ni(2+) pocket.

It belongs to the metallo-dependent hydrolases superfamily. Urease alpha subunit family. In terms of assembly, heterotrimer of UreA (gamma), UreB (beta) and UreC (alpha) subunits. Three heterotrimers associate to form the active enzyme. Ni cation serves as cofactor. In terms of processing, carboxylation allows a single lysine to coordinate two nickel ions.

The protein resides in the cytoplasm. The catalysed reaction is urea + 2 H2O + H(+) = hydrogencarbonate + 2 NH4(+). It functions in the pathway nitrogen metabolism; urea degradation; CO(2) and NH(3) from urea (urease route): step 1/1. In Prochlorococcus marinus (strain MIT 9301), this protein is Urease subunit alpha.